The chain runs to 506 residues: Histidine ammonia-lyase (506 aa).

The 5-imidazolinone (Ala-Gly) cross-link spans A144–G146. S145 carries the 2,3-didehydroalanine (Ser) modification.

Belongs to the PAL/histidase family. In terms of processing, contains an active site 4-methylidene-imidazol-5-one (MIO), which is formed autocatalytically by cyclization and dehydration of residues Ala-Ser-Gly.

The protein localises to the cytoplasm. It carries out the reaction L-histidine = trans-urocanate + NH4(+). The protein operates within amino-acid degradation; L-histidine degradation into L-glutamate; N-formimidoyl-L-glutamate from L-histidine: step 1/3. The protein is Histidine ammonia-lyase of Legionella pneumophila (strain Lens).